The chain runs to 538 residues: Syncytin-2 (538 aa).

A signal peptide spans 1–15 (MGLLLLVLILTPLLA). Over 16-478 (AHRHPDFPLL…GWLNWEGTWK (463 aa)) the chain is Extracellular. Residues 43-46 (CWLC) carry the CXXC motif. Intrachain disulfides connect cysteine 43–cysteine 46, cysteine 43–cysteine 439, and cysteine 431–cysteine 438. 8 N-linked (GlcNAc...) asparagine glycosylation sites follow: asparagine 133, asparagine 146, asparagine 177, asparagine 220, asparagine 241, asparagine 247, asparagine 312, and asparagine 332. The interval 354-374 (FIPLLAGLGIIAGTGTGIAGI) is fusion peptide. The CKS-17 signature appears at 414–430 (LQNRRGLDMLTAAQGGI). Positions 431–439 (CLALDEKCC) match the CX6CC motif. The N-linked (GlcNAc...) asparagine glycan is linked to asparagine 443. Residues 479–499 (WFSWVLPFTGPLVSLLLLLLF) form a helical membrane-spanning segment. Over 500–538 (GPCLLNLITQFVLSRLQAIKLQTNLSAGCRPHNIQESPF) the chain is Cytoplasmic.

Belongs to the gamma type-C retroviral envelope protein family. HERV class-I FRD env subfamily. In terms of assembly, the surface and transmembrane proteins form a heterodimer. They are attached by non-covalent interactions or by a labile interchain disulfide bond. Specific enzymatic cleavages in vivo yield the mature SU and TM proteins. In terms of processing, the CXXC motif is highly conserved across a broad range of retroviral envelope proteins. It is thought to participate in the formation of a labile disulfide bond possibly with the CX6CC motif present in the transmembrane protein.

It is found in the virion. It localises to the cell membrane. Its function is as follows. This endogenous retroviral envelope protein has retained its original fusogenic properties and participates in trophoblast fusion and the formation of a syncytium during placenta morphogenesis. The interaction with MFSD2A is apparently important for this process. In terms of biological role, endogenous envelope proteins may have kept, lost or modified their original function during evolution but this one can still make pseudotypes with MLV, HIV-1 or SIV-1 virions and confer infectivity. Retroviral envelope proteins mediate receptor recognition and membrane fusion during early infection. The surface protein mediates receptor recognition, while the transmembrane protein anchors the envelope heterodimer to the viral membrane through one transmembrane domain. The other hydrophobic domain, called fusion peptide, mediates fusion of the viral membrane with the target cell membrane. In Pongo pygmaeus (Bornean orangutan), this protein is Syncytin-2 (ERVFRD-1).